We begin with the raw amino-acid sequence, 465 residues long: Cysteine--tRNA ligase (465 aa).

A Zn(2+)-binding site is contributed by Cys29. The 'HIGH' region signature appears at Pro31–Asn41. Zn(2+) is bound by residues Cys209, His234, and Glu238. Positions Lys266–Ser270 match the 'KMSKS' region motif. Lys269 is a binding site for ATP. Phosphoserine is present on Ser270.

It belongs to the class-I aminoacyl-tRNA synthetase family. As to quaternary structure, monomer. Zn(2+) is required as a cofactor.

The protein localises to the cytoplasm. The catalysed reaction is tRNA(Cys) + L-cysteine + ATP = L-cysteinyl-tRNA(Cys) + AMP + diphosphate. The protein is Cysteine--tRNA ligase of Bacillus thuringiensis (strain Al Hakam).